The sequence spans 685 residues: MTAEPNKPCQIKRDYPQLINLYPATADTDAHYLSKLSIYQQRVFEAHSQQKLLVLGQIGLSNGLELLSWWRAHSHLSQRLLLKVFEPNPINAYELKLLWDQSACLTKEPELEPLAQRLLHAEPAAIIGCQRLIFDDGRFTIDLHFGDIQSQLSSLIHSPMHPVQHWLILPHLLQALHHQSHWQMAKLSDDSATIATIGLSESSGLSETTVNRFQACGFTVSDINELGIHQPVTLINHQPDAVLLHERQVLRQQDAKAYAFNPMAAILSSATQSSIAIIGGGLASAHLALSLAERGQGAQVFCKDAELGQGASGNRQGAIYPLLTPENDELSRFFQQAFLFSRRRVQALTSAPADNQTPISHVFCGVLQTAHDERSQLRLDKIIQGQPWPSEIAYAVDAEQANAIAKINLDKPGFFYPLGGWVCPFEYADAAIQKAMQLADVSVSLNTDILAIERQSDGWVLLTEKERLGPFAQLVLANGAELTQFDASNKLQISPFRGQVSHVPAQFQLSQLATVLCANGYLTPSHQGLHCLGASYVKEPKHLDFCPQEQQENLAKMHESYPKQSWLEDIDMSGNNARVGVRMVTRDHFPMMGCAPDVPKIIKDYAQHQLTKESRHYWQTTPAPVHQGLYILGGLGSRGLSSGPLAAECLAAQLCGEPIPLDKATLCKLNPNRMWLRKLLKGKAL.

The interval 1–272 (MTAEPNKPCQ…MAAILSSATQ (272 aa)) is tRNA (mnm(5)s(2)U34)-methyltransferase. The FAD-dependent cmnm(5)s(2)U34 oxidoreductase stretch occupies residues 278–685 (IGGGLASAHL…LRKLLKGKAL (408 aa)).

It in the N-terminal section; belongs to the methyltransferase superfamily. tRNA (mnm(5)s(2)U34)-methyltransferase family. The protein in the C-terminal section; belongs to the DAO family. FAD serves as cofactor.

It is found in the cytoplasm. The enzyme catalyses 5-aminomethyl-2-thiouridine(34) in tRNA + S-adenosyl-L-methionine = 5-methylaminomethyl-2-thiouridine(34) in tRNA + S-adenosyl-L-homocysteine + H(+). Its function is as follows. Catalyzes the last two steps in the biosynthesis of 5-methylaminomethyl-2-thiouridine (mnm(5)s(2)U) at the wobble position (U34) in tRNA. Catalyzes the FAD-dependent demodification of cmnm(5)s(2)U34 to nm(5)s(2)U34, followed by the transfer of a methyl group from S-adenosyl-L-methionine to nm(5)s(2)U34, to form mnm(5)s(2)U34. The protein is tRNA 5-methylaminomethyl-2-thiouridine biosynthesis bifunctional protein MnmC of Shewanella baltica (strain OS185).